A 432-amino-acid chain; its full sequence is FLYWCH-type zinc finger-containing protein peb-1 (432 aa).

Residues 1–33 (MLGLEKPLSSDISSSSTDTSAISPISVSSMPLS) form a disordered region. Over residues 9–26 (SSDISSSSTDTSAISPIS) the composition is skewed to low complexity. Residues 30 to 188 (MPLSPDKEKK…RNKEGKPRKP (159 aa)) constitute a DNA-binding region (required for DNA-binding). The segment at 53 to 120 (IVTSFKGYQK…NACTKNTHNH (68 aa)) adopts an FLYWCH-type zinc-finger fold. The segment at 174–195 (SLVSARNKEGKPRKPKSKTSTN) is disordered.

The protein localises to the nucleus. Putative transcription factor. Binds to specific sequence motif 5'-[TC][AGT]TGCC[GA][AT]-3' in regulatory elements of target genes such as myosin myo-2. May modulate gene expression, perhaps acting in opposition to transcription factor pha-4. Involved in morphogenesis, perhaps especially in formation of the pharynx. Plays roles in molting, feeding and morphology. This chain is FLYWCH-type zinc finger-containing protein peb-1, found in Caenorhabditis briggsae.